A 111-amino-acid chain; its full sequence is Transcription and mRNA export factor SUS1 (111 aa).

The protein belongs to the ENY2 family. Component of the nuclear pore complex (NPC)-associated TREX-2 complex (transcription and export complex 2), composed of at least SUS1, SAC3, THP1, SEM1, and CDC31. TREX-2 contains 2 SUS1 chains. The TREX-2 complex interacts with the nucleoporin NUP1. Component of the 1.8 MDa SAGA transcription coactivator-HAT complex. SAGA is built of 5 distinct domains with specialized functions. Within the SAGA complex, SUS1, SGF11, SGF73 and UBP8 form an additional subcomplex of SAGA called the DUB module (deubiquitination module). Interacts directly with THP1, SAC3, SGF11, and with the RNA polymerase II.

It localises to the nucleus. The protein resides in the nucleoplasm. It is found in the cytoplasm. The protein localises to the P-body. In terms of biological role, involved in mRNA export coupled transcription activation by association with both the TREX-2 and the SAGA complexes. At the promoters, SAGA is required for recruitment of the basal transcription machinery. It influences RNA polymerase II transcriptional activity through different activities such as TBP interaction and promoter selectivity, interaction with transcription activators, and chromatin modification through histone acetylation and deubiquitination. Within the SAGA complex, participates in a subcomplex required for deubiquitination of H2B and for the maintenance of steady-state H3 methylation levels. The TREX-2 complex functions in docking export-competent ribonucleoprotein particles (mRNPs) to the nuclear entrance of the nuclear pore complex (nuclear basket). TREX-2 participates in mRNA export and accurate chromatin positioning in the nucleus by tethering genes to the nuclear periphery. May also be involved in cytoplasmic mRNA decay by interaction with components of P-bodies. The protein is Transcription and mRNA export factor SUS1 of Lodderomyces elongisporus (strain ATCC 11503 / CBS 2605 / JCM 1781 / NBRC 1676 / NRRL YB-4239) (Yeast).